The sequence spans 203 residues: Small ribosomal subunit protein uS4c (203 aa).

Positions 17–39 (TLPGLTTKKSNKLNRPGKDGNTD) are disordered. The S4 RNA-binding domain maps to 92–164 (MRLDTLCFTL…IKNNQVREIP (73 aa)).

Belongs to the universal ribosomal protein uS4 family. In terms of assembly, part of the 30S ribosomal subunit. Contacts protein S5. The interaction surface between S4 and S5 is involved in control of translational fidelity.

Its subcellular location is the plastid. The protein resides in the chloroplast. One of the primary rRNA binding proteins, it binds directly to 16S rRNA where it nucleates assembly of the body of the 30S subunit. Its function is as follows. With S5 and S12 plays an important role in translational accuracy. This is Small ribosomal subunit protein uS4c (rps4) from Phaeodactylum tricornutum (strain CCAP 1055/1).